Consider the following 507-residue polypeptide: Transcription factor NIGTH1 (507 aa).

2 disordered regions span residues alanine 139–aspartate 172 and serine 238–arginine 268. The segment covering proline 152 to leucine 161 has biased composition (basic and acidic residues). Residues proline 263–arginine 323 form the HTH myb-type domain. The segment at residues proline 294–arginine 319 is a DNA-binding region (H-T-H motif). The interval alanine 402–tyrosine 507 is disordered. Over residues glutamine 412–aspartate 433 the composition is skewed to low complexity. Gly residues predominate over residues arginine 437–alanine 446. Over residues glutamate 456 to methionine 476 the composition is skewed to acidic residues.

As to quaternary structure, interacts with ACA5.

Its subcellular location is the nucleus. Functionally, probable transcription factor that may play a role in regulatory networks controlling development and metabolism. The protein is Transcription factor NIGTH1 of Oryza sativa subsp. japonica (Rice).